The primary structure comprises 110 residues: uncharacterized protein (110 aa).

This is an uncharacterized protein from Methanocaldococcus jannaschii (strain ATCC 43067 / DSM 2661 / JAL-1 / JCM 10045 / NBRC 100440) (Methanococcus jannaschii).